Here is a 332-residue protein sequence, read N- to C-terminus: Small ribosomal subunit biogenesis GTPase RsgA (332 aa).

A CP-type G domain is found at 103–259; the sequence is RQQLIAANLD…LIDTPGMREL (157 aa). Residues 148–151 and 201–209 each bind GTP; these read TKVD and GSSGAGKST. Positions 281, 286, 288, and 294 each coordinate Zn(2+).

It belongs to the TRAFAC class YlqF/YawG GTPase family. RsgA subfamily. As to quaternary structure, monomer. Associates with 30S ribosomal subunit, binds 16S rRNA. It depends on Zn(2+) as a cofactor.

The protein localises to the cytoplasm. In terms of biological role, one of several proteins that assist in the late maturation steps of the functional core of the 30S ribosomal subunit. Helps release RbfA from mature subunits. May play a role in the assembly of ribosomal proteins into the subunit. Circularly permuted GTPase that catalyzes slow GTP hydrolysis, GTPase activity is stimulated by the 30S ribosomal subunit. The chain is Small ribosomal subunit biogenesis GTPase RsgA from Xylella fastidiosa (strain M12).